The chain runs to 408 residues: Multidrug resistance protein MdtG (408 aa).

A run of 11 helical transmembrane segments spans residues 16 to 36, 58 to 78, 92 to 112, 115 to 135, 146 to 166, 173 to 193, 224 to 244, 256 to 276, 290 to 310, 319 to 339, and 378 to 398; these read LIVAWLGCFLTGAAFSLVMPF, IVFSITFLFSSIASPFWGGLA, LGMGIVMVLMGLAQNIWQFLI, ALLGLLGGFVPNANALIATQV, TLSTGGVSGALLGPMAGGLLA, PVFFITASVLILCFFVTLFCI, LFVTTLIIQVATGSIAPILTL, VAFISGMIASVPGVAALLSAP, ILITALIFSVLLLIPMSYVQT, FLLGAADGALLPAVQTLLVYN, and AVFLVTAGVVLFNAVYSWNSL.

It belongs to the major facilitator superfamily. DHA1 family. MdtG (TC 2.A.1.2.20) subfamily.

It localises to the cell inner membrane. Its function is as follows. Confers resistance to fosfomycin and deoxycholate. The polypeptide is Multidrug resistance protein MdtG (Escherichia coli (strain 55989 / EAEC)).